The following is a 975-amino-acid chain: Glycine dehydrogenase (decarboxylating) (975 aa).

Lys-723 is modified (N6-(pyridoxal phosphate)lysine).

This sequence belongs to the GcvP family. In terms of assembly, the glycine cleavage system is composed of four proteins: P, T, L and H. Requires pyridoxal 5'-phosphate as cofactor.

The catalysed reaction is N(6)-[(R)-lipoyl]-L-lysyl-[glycine-cleavage complex H protein] + glycine + H(+) = N(6)-[(R)-S(8)-aminomethyldihydrolipoyl]-L-lysyl-[glycine-cleavage complex H protein] + CO2. The glycine cleavage system catalyzes the degradation of glycine. The P protein binds the alpha-amino group of glycine through its pyridoxal phosphate cofactor; CO(2) is released and the remaining methylamine moiety is then transferred to the lipoamide cofactor of the H protein. The polypeptide is Glycine dehydrogenase (decarboxylating) (Burkholderia mallei (strain NCTC 10247)).